The primary structure comprises 295 residues: ATP synthase gamma chain (295 aa).

It belongs to the ATPase gamma chain family. F-type ATPases have 2 components, CF(1) - the catalytic core - and CF(0) - the membrane proton channel. CF(1) has five subunits: alpha(3), beta(3), gamma(1), delta(1), epsilon(1). CF(0) has three main subunits: a, b and c.

It localises to the cell inner membrane. Its function is as follows. Produces ATP from ADP in the presence of a proton gradient across the membrane. The gamma chain is believed to be important in regulating ATPase activity and the flow of protons through the CF(0) complex. The polypeptide is ATP synthase gamma chain (Bdellovibrio bacteriovorus (strain ATCC 15356 / DSM 50701 / NCIMB 9529 / HD100)).